Here is a 432-residue protein sequence, read N- to C-terminus: Anaerobic glycerol-3-phosphate dehydrogenase subunit B (432 aa).

It belongs to the anaerobic G-3-P dehydrogenase subunit B family. In terms of assembly, composed of a catalytic GlpA/B dimer and of membrane bound GlpC. FMN serves as cofactor.

The enzyme catalyses a quinone + sn-glycerol 3-phosphate = dihydroxyacetone phosphate + a quinol. It functions in the pathway polyol metabolism; glycerol degradation via glycerol kinase pathway; glycerone phosphate from sn-glycerol 3-phosphate (anaerobic route): step 1/1. In terms of biological role, conversion of glycerol 3-phosphate to dihydroxyacetone. Uses fumarate or nitrate as electron acceptor. This is Anaerobic glycerol-3-phosphate dehydrogenase subunit B from Haemophilus influenzae (strain 86-028NP).